The sequence spans 495 residues: MEFLKKLEVWFVVGSQDLYGDEALKQVNANAEQITRYLNDQNPFIQIKLKPLATTPEDILSLCQAANYEENCVGVIAWMHTFSPAKMWIGGLTRLNKPLLQFHTQLNKNIPWNEIDMDYMNLHQTAHGDREFGFMVSRFRKPRTIVVGHWQSESVKQKLDRWMRVLAAIYDQQHLKVARFGDNMREVAVTEGDKVEAQIKFGYSVNGYGLYQLVNSINTVNDEDITALVKEYEASYQLADSLKDGGEKRQSLIDSARIELGLKAFLDKGGFKAFTDTFQNLAGIKQLPGLPVQRLMAQGYGFGAEGDWKTAALVRAIKVMSYGLPNGCSFMEDYTYNLDDNNEIVLGAHMLEVCPSIANNKPILDIKPLGIGGKEDPARLIFTSKSGKATASTIVDLGNRFRMITADMQAVDKPQDMPNLPVGHAFWKLEPNFDIGTQAWILSGGAHHNVFSLDIDADMLRTFAEYFDIEFIHINVKTELPNLKNELRWNEAAYK.

Mn(2+)-binding residues include Glu-305, Glu-332, His-349, and His-448.

This sequence belongs to the arabinose isomerase family. Requires Mn(2+) as cofactor.

The catalysed reaction is beta-L-arabinopyranose = L-ribulose. It participates in carbohydrate degradation; L-arabinose degradation via L-ribulose; D-xylulose 5-phosphate from L-arabinose (bacterial route): step 1/3. In terms of biological role, catalyzes the conversion of L-arabinose to L-ribulose. This chain is L-arabinose isomerase, found in Mannheimia succiniciproducens (strain KCTC 0769BP / MBEL55E).